The primary structure comprises 744 residues: Tripartite motif-containing protein 3 (744 aa).

A2 is subject to N-acetylalanine. An interaction with KIF21B region spans residues 2-290; that stretch reads AKREDSPGPE…LAAQAFPERP (289 aa). S7 is subject to Phosphoserine. The RING-type zinc-finger motif lies at 22 to 63; the sequence is CSICLDRYRCPKVLPCLHTFCERCLQNYIPPQSLTLSCPVCR. The B box-type zinc-finger motif lies at 110–151; it reads GRPLSCPNHEGKTMEFYCEACETAMCGECRAGEHREHGTVLL. C115, H118, C138, and H143 together coordinate Zn(2+). The stretch at 153–224 forms a coiled coil; that stretch reads DVVEQHKAAL…RKQALVSDLE (72 aa). The stretch at 317–418 is one Filamin repeat; that stretch reads TTSATAHETV…VRGSPFRVRA (102 aa). The disordered stretch occupies residues 419–464; the sequence is LRPGDLPPSPDDVKRRVKSPGGPGSHVRQKAVRRPSSMYSTGGKRK. Residue S427 is modified to Phosphoserine. NHL repeat units lie at residues 473–516, 520–563, 564–605, 609–652, 656–699, and 700–743; these read VFRV…FSNE, KFRF…FSPE, GKFK…FQPN, VGRF…YSAD, LFKF…FDSS, and GSFL…YRYL.

The protein belongs to the TRIM/RBCC family. In terms of assembly, forms homooligomers. Interacts with TRIM2; this interaction reduces TRIM2 activity. Associates with myosin-Vb (MYO5B) and alpha-actinin-4 (ACTN4). Component of the CART complex, at least composed of ACTN4, HGS/HRS, MYO5B and TRIM3. Interacts with ZFYVE28/LST2. Interacts with KIF21B.

Its subcellular location is the cytoplasm. It is found in the early endosome. The protein resides in the golgi apparatus. It localises to the trans-Golgi network. The protein localises to the cell projection. Its subcellular location is the dendrite. It catalyses the reaction S-ubiquitinyl-[E2 ubiquitin-conjugating enzyme]-L-cysteine + [acceptor protein]-L-lysine = [E2 ubiquitin-conjugating enzyme]-L-cysteine + N(6)-ubiquitinyl-[acceptor protein]-L-lysine.. Functionally, E3 ubiquitin ligase that plays essential roles in neuronal functions such as regulation of neuronal plasticity, learning, and memory. In addition to its neuronal functions, participates in other biological processes such as innate immunity or cell cycle regulation. Component of the cytoskeleton-associated recycling or transport complex in neurons, polyubiquitinates gamma-actin, thus regulating neuronal plasticity, learning, and memory. Ubiquitinates postsynaptic scaffold GKAP, a neuronal substrate involved in synaptic remodeling and thereby modulates dendritic spine morphology. Positively regulates motility of microtubule-dependent motor protein KIF21B. Induces growth arrest via its RING-dependent E3 ligase activity and ubiquinates CDKN1A. Positively regulates TLR3-mediated signaling by mediating 'Lys-63'-linked polyubiquitination of TLR3. In turn, promotes the recognition and sorting of polyubiquitinated TLR3 by the ESCRT complexes. In Mus musculus (Mouse), this protein is Tripartite motif-containing protein 3 (Trim3).